A 474-amino-acid polypeptide reads, in one-letter code: Aspartate ammonia-lyase (474 aa).

The L-aspartate site is built by T105, S144, T145, N146, and T191. Residues 322-331 are SS loop; the sequence is GSSIMPGKVN. Residue S323 is the Proton acceptor of the active site. 2 residues coordinate L-aspartate: S324 and K329.

The protein belongs to the class-II fumarase/aspartase family. Aspartase subfamily. In terms of assembly, homotetramer.

The catalysed reaction is L-aspartate = fumarate + NH4(+). Its function is as follows. Lyase involved in the degradation of canavanine, the delta-oxa-analog of arginine, allowing growth on canavanine as sole nitrogen and carbon source. Probably catalyzes the conversion of L-aspartate to fumarate and ammonia. The protein is Aspartate ammonia-lyase of Pseudomonas canavaninivorans.